The chain runs to 385 residues: Protein-glutamate methylesterase/protein-glutamine glutaminase (385 aa).

D53 carries the post-translational modification 4-aspartylphosphate. Residues 196–385 enclose the CheB-type methylesterase domain; the sequence is KHKTGKIIVV…EIADHVLRRS (190 aa). Residues S208, H234, and D330 contribute to the active site.

The protein belongs to the CheB family. Post-translationally, phosphorylated by CheA. Phosphorylation of the N-terminal regulatory domain activates the methylesterase activity.

The protein localises to the cytoplasm. The enzyme catalyses [protein]-L-glutamate 5-O-methyl ester + H2O = L-glutamyl-[protein] + methanol + H(+). The catalysed reaction is L-glutaminyl-[protein] + H2O = L-glutamyl-[protein] + NH4(+). Involved in chemotaxis. Part of a chemotaxis signal transduction system that modulates chemotaxis in response to various stimuli. Catalyzes the demethylation of specific methylglutamate residues introduced into the chemoreceptors (methyl-accepting chemotaxis proteins or MCP) by CheR. Also mediates the irreversible deamidation of specific glutamine residues to glutamic acid. The chain is Protein-glutamate methylesterase/protein-glutamine glutaminase from Borreliella burgdorferi (strain ATCC 35210 / DSM 4680 / CIP 102532 / B31) (Borrelia burgdorferi).